A 285-amino-acid chain; its full sequence is Retron Ec67 DNA adenine methylase (285 aa).

Residues tryptophan 7, lysine 11, aspartate 51, and aspartate 179 each coordinate S-adenosyl-L-methionine.

This sequence belongs to the N(4)/N(6)-methyltransferase family.

It carries out the reaction a 2'-deoxyadenosine in DNA + S-adenosyl-L-methionine = an N(6)-methyl-2'-deoxyadenosine in DNA + S-adenosyl-L-homocysteine + H(+). An alpha subtype methylase that recognizes the double-stranded sequence 5'-GATC-3' and methylates A-2 on both strands. May play a regulatory role in the functions of the retron. This chain is Retron Ec67 DNA adenine methylase, found in Escherichia coli.